A 311-amino-acid chain; its full sequence is Pantothenate kinase (311 aa).

ATP is bound at residue 93–100 (GSVAVGKS).

It belongs to the prokaryotic pantothenate kinase family.

The protein localises to the cytoplasm. The enzyme catalyses (R)-pantothenate + ATP = (R)-4'-phosphopantothenate + ADP + H(+). It participates in cofactor biosynthesis; coenzyme A biosynthesis; CoA from (R)-pantothenate: step 1/5. In Haemophilus influenzae (strain ATCC 51907 / DSM 11121 / KW20 / Rd), this protein is Pantothenate kinase (coaA).